The chain runs to 231 residues: Probable calcium-binding protein CML21 (231 aa).

EF-hand domains lie at 54–89, 90–125, 145–180, and 181–216; these read DGLRNCKAIFQEFDEDSNGSIDHTELKNCIRKLEIS, FDEEEINDLFKACDINEDMGITFTEFIVLLCLVYLL, PTFETLVDTFVFLDENKDGYVSREEMVRAIDESGER, and SSGRIAMKRFEEMDWDKNGMVNFKEFLFAFTQWVGI. Ca(2+)-binding residues include Asp-67, Asp-69, Asn-71, Ser-73, and Glu-78. Ca(2+) contacts are provided by Asp-158, Asn-160, Asp-162, Tyr-164, Glu-169, Asp-194, Asp-196, Asn-198, Met-200, and Glu-205.

In terms of biological role, potential calcium sensor. In Arabidopsis thaliana (Mouse-ear cress), this protein is Probable calcium-binding protein CML21 (CML21).